The sequence spans 439 residues: Xylose isomerase (439 aa).

Active-site residues include His101 and Asp104. The Mg(2+) site is built by Glu232, Glu268, His271, Asp296, Asp307, Asp309, and Asp339.

This sequence belongs to the xylose isomerase family. As to quaternary structure, homotetramer. Mg(2+) is required as a cofactor.

The protein resides in the cytoplasm. The catalysed reaction is alpha-D-xylose = alpha-D-xylulofuranose. In Photobacterium profundum (strain SS9), this protein is Xylose isomerase.